The primary structure comprises 312 residues: Speedy protein A (312 aa).

Residues 67–199 (RQEMTAFFKL…SHYIWQRERS (133 aa)) are speedy/Ringo box; Required for CDK-binding. Position 221 is a phosphoserine (Ser-221). Position 223 is a phosphothreonine (Thr-223).

The protein belongs to the Speedy/Ringo family. As to quaternary structure, interacts with CDK1. Interacts with CDK2. May interact with CDKN1B/KIP1. Identified in a complex with CDK2 and CDKN1B/KIP1, where it interacts primarily with CDK2.

It is found in the nucleus. Functionally, regulates the G1/S phase transition of the cell cycle by binding and activating CDK1 and CDK2. Contributes to CDK2 activation without promoting CDK2 phosphorylation, by inducing a conformation change of the CDK2 T-loop that obstructs the substrate-binding cleft prior to kinase activation. Interferes with CDKN1B-mediated inhibition of CDK2. Mediates cell survival during the DNA damage process through activation of CDK2. In Rattus norvegicus (Rat), this protein is Speedy protein A.